The following is a 185-amino-acid chain: MRNQKAERLVAAGLVLHIIQWIFILWAFLKVKHLFSDYTIYNPNVISGSMQSLSFIQMMRAMMYSGAIVNYVLFFALVLLIYGIVLHAILIVLEMAAYVMIRRNPSSSWGFFFIAAGVKLAILNITGIPFLAAGFLLMKQKKAENGVKAERKRKPRLRIRRQGRRLNRIRRKPSLPVEYQKEKTI.

3 helical membrane passes run 9–29 (LVAA…WAFL), 72–92 (VLFF…ILIV), and 111–131 (FFFI…IPFL).

Its subcellular location is the cell membrane. This is an uncharacterized protein from Bacillus subtilis (strain 168).